The sequence spans 177 residues: Large ribosomal subunit protein uL6 (177 aa).

It belongs to the universal ribosomal protein uL6 family. As to quaternary structure, part of the 50S ribosomal subunit.

Its function is as follows. This protein binds to the 23S rRNA, and is important in its secondary structure. It is located near the subunit interface in the base of the L7/L12 stalk, and near the tRNA binding site of the peptidyltransferase center. This chain is Large ribosomal subunit protein uL6, found in Teredinibacter turnerae (strain ATCC 39867 / T7901).